Consider the following 396-residue polypeptide: Proteinase-activated receptor 4 (396 aa).

Residues 1 to 16 form the signal peptide; that stretch reads MCWPLLYPLVLGLSIS. Residues 17-59 constitute a propeptide, removed for receptor activation; the sequence is LAEGIQTPSIYDDVESTRGSHEGPLGPTVELKEPKSSDKPNPR. The tract at residues 28 to 62 is disordered; sequence DDVESTRGSHEGPLGPTVELKEPKSSDKPNPRGYP. The segment covering 46-57 has biased composition (basic and acidic residues); that stretch reads ELKEPKSSDKPN. Over 60 to 94 the chain is Extracellular; that stretch reads GYPGKFCANDSDTLELPASSQALLLGWVPTRLVPA. A glycan (N-linked (GlcNAc...) asparagine) is linked at N68. A helical transmembrane segment spans residues 95–115; that stretch reads LYGLVVAVGLPANGLALWVLA. Residues 116-120 lie on the Cytoplasmic side of the membrane; sequence TRVPR. Residues 121-141 form a helical membrane-spanning segment; sequence LPSTILLMNLAVADLLLALVL. At 142-162 the chain is on the extracellular side; the sequence is PPRLAYHLRGQRWPFGEAACR. C161 and C240 are joined by a disulfide. The helical transmembrane segment at 163–183 threads the bilayer; it reads VATAALYGHMYGSVLLLAAVS. The Cytoplasmic portion of the chain corresponds to 184–203; that stretch reads LDRYLALVHPLRARALRGQR. Residues 204-224 form a helical membrane-spanning segment; that stretch reads LTTGLCLVAWLSAATLALPLT. At 225 to 255 the chain is on the extracellular side; sequence LHRQTFRLAGSDRMLCHDALPLTEQTSHWRP. Residues 256–276 traverse the membrane as a helical segment; sequence AFICLAVLGCFVPLLAMGLCY. Residues 277–295 are Cytoplasmic-facing; it reads GATLRALAANGQRYSHALR. A helical membrane pass occupies residues 296-316; sequence LTALVLFSAVASFTPSNVLLV. The Extracellular portion of the chain corresponds to 317-331; sequence LHYSNPSPEAWGNLY. The helical transmembrane segment at 332–355 threads the bilayer; it reads GAYVPSLALSTLNSCVDPFIYYYV. Over 356–396 the chain is Cytoplasmic; the sequence is SHEFREKVRAMLCRQPEASSSSQASREAGSRGTAICSSTLL.

It belongs to the G-protein coupled receptor 1 family. Post-translationally, a proteolytic cleavage generates a new N-terminus that functions as a tethered ligand. Highly expressed in the spleen. Slight expression in the heart, lung, skeletal muscle and kidney. No detectable expression in brain, liver or testis. Also detected in platelets.

It is found in the cell membrane. Its function is as follows. Receptor for activated thrombin or trypsin coupled to G proteins that stimulate phosphoinositide hydrolysis. May play a role in platelets activation. The chain is Proteinase-activated receptor 4 (F2rl3) from Mus musculus (Mouse).